The chain runs to 906 residues: Ribonucleoside-diphosphate reductase large subunit-like protein (906 aa).

Disordered regions lie at residues 1 to 70 (MNPA…AGNT) and 89 to 129 (VSWR…LSTF). Positions 98–109 (PDGTPSVLSLTR) are enriched in polar residues.

This sequence belongs to the ribonucleoside diphosphate reductase large chain family.

It is found in the virion. The protein localises to the host cytoplasm. In terms of biological role, does not possess a ribonucleotide reductase activity. Betaherpesviruses probably use another strategy to expand the dNTP pool in a quiescent host cell. In Human cytomegalovirus (strain AD169) (HHV-5), this protein is Ribonucleoside-diphosphate reductase large subunit-like protein.